The chain runs to 453 residues: Chromosomal replication initiator protein DnaA (453 aa).

The domain I, interacts with DnaA modulators stretch occupies residues Met1–Tyr73. The tract at residues Tyr73–Ile110 is domain II. Residues Lys111 to Ile327 are domain III, AAA+ region. 4 residues coordinate ATP: Gly155, Gly157, Lys158, and Thr159. The tract at residues Ser328–Thr453 is domain IV, binds dsDNA.

The protein belongs to the DnaA family. As to quaternary structure, oligomerizes as a right-handed, spiral filament on DNA at oriC.

It is found in the cytoplasm. Plays an essential role in the initiation and regulation of chromosomal replication. ATP-DnaA binds to the origin of replication (oriC) to initiate formation of the DNA replication initiation complex once per cell cycle. Binds the DnaA box (a 9 base pair repeat at the origin) and separates the double-stranded (ds)DNA. Forms a right-handed helical filament on oriC DNA; dsDNA binds to the exterior of the filament while single-stranded (ss)DNA is stabiized in the filament's interior. The ATP-DnaA-oriC complex binds and stabilizes one strand of the AT-rich DNA unwinding element (DUE), permitting loading of DNA polymerase. After initiation quickly degrades to an ADP-DnaA complex that is not apt for DNA replication. Binds acidic phospholipids. This Gloeothece citriformis (strain PCC 7424) (Cyanothece sp. (strain PCC 7424)) protein is Chromosomal replication initiator protein DnaA.